The following is a 170-amino-acid chain: Probable inosine/xanthosine triphosphatase (170 aa).

Glutamate 31 provides a ligand contact to Mg(2+).

It belongs to the YjjX NTPase family. In terms of assembly, homodimer. Mg(2+) serves as cofactor. Requires Mn(2+) as cofactor.

The catalysed reaction is XTP + H2O = XDP + phosphate + H(+). The enzyme catalyses ITP + H2O = IDP + phosphate + H(+). Its function is as follows. Phosphatase that hydrolyzes non-canonical purine nucleotides such as XTP and ITP to their respective diphosphate derivatives. Probably excludes non-canonical purines from DNA/RNA precursor pool, thus preventing their incorporation into DNA/RNA and avoiding chromosomal lesions. This Oceanobacillus iheyensis (strain DSM 14371 / CIP 107618 / JCM 11309 / KCTC 3954 / HTE831) protein is Probable inosine/xanthosine triphosphatase.